The primary structure comprises 133 residues: Core atranone cluster (CAC) protein 11 (133 aa).

It functions in the pathway mycotoxin biosynthesis. Part of the core atranone cluster (CAC) which products are predicted to catalyze most or all steps of mycotoxin atranone synthesis, starting from geranylgeranyl pyrophosphate (GGPP). The initial cyclization of GGPP to dolabellane is probably performed by the terpene cyclase ATR13. The Baeyer-Villiger oxidation near the end of the atranone synthesis, which converts atranones D and E to atranones F and G is predicted to be catalyzed by the monooxygenase ATR8. Of the CAC's other predicted gene products, the reducing PKS ATR6 might synthesize a polyketide chain. This polyketide is probably transferred onto the atranone backbone by the polyketide transferase ATR5. Other predicted CAC products include 4 oxygenases (ATR2, ATR3, ATR4, and ATR14), 3 short-chain reductases (ATR7, ATR9, and ATR10), and a methyltransferase (ATR12). These may all be involved in the various steps of atranone biosynthesis, although their specific roles must await experimental determination. The polypeptide is Core atranone cluster (CAC) protein 11 (Stachybotrys chlorohalonatus (strain IBT 40285)).